A 347-amino-acid polypeptide reads, in one-letter code: uncharacterized protein (347 aa).

The RING-type zinc-finger motif lies at 5–44 (CTICHNTPNRPVRLDCNHEFCYICIKGSIQNDMLNCAVCR). Residues 244-321 (NVQANFNVAR…NLDAWRQIKR (78 aa)) form the WWE domain.

This is an uncharacterized protein from Caenorhabditis elegans.